We begin with the raw amino-acid sequence, 121 residues long: Structural protein p14.5 (121 aa).

Disordered regions lie at residues 1 to 24 (MADFNSPIQYLKEDSRDRTSIGSL) and 84 to 121 (TSLVPEETDNKPEDDEESGAKPKKKKHLFPKLSSHKSK). At Ala2 the chain carries N-acetylalanine; by host. Positions 104–121 (KPKKKKHLFPKLSSHKSK) are enriched in basic residues.

This sequence belongs to the asfivirus structural protein p14.5 family. As to quaternary structure, interacts with the major capsid protein. Interacts with host IRF3; this interaction interferes with the recruitment of IRF3 to TBK1. In terms of processing, acetylated.

The protein localises to the virion. Its function is as follows. Structural protein required for transport of intracellular particles from the assembly sites to the plasma membrane. Binds to both ssDNA and dsDNA. Suppressed the activation of the cGAS/STING pathway by interfering with the recruitment of IRF3 to TBK1, which in turn suppresses IRF3 phosphorylation, decreasing interferon production. This Ornithodoros (relapsing fever ticks) protein is Structural protein p14.5.